The chain runs to 118 residues: Protein 5.3 (118 aa).

This Escherichia phage T7 (Bacteriophage T7) protein is Protein 5.3.